A 1700-amino-acid polypeptide reads, in one-letter code: uncharacterized protein (1700 aa).

Residues 986–1006 (APITQYPVLCYLLYLLSYYLV) form a helical membrane-spanning segment. Coiled coils occupy residues 1246–1278 (DQNAENLLRNIHNQQIKYENQQKVVEDFIREIK) and 1657–1684 (QDMDGEPQEADELEDLKEEAESLDIEGD). Residues 1650-1700 (DTEPDIMQDMDGEPQEADELEDLKEEAESLDIEGDYFAEEDEDYAQEDFIE) form a disordered region. Acidic residues predominate over residues 1651–1700 (TEPDIMQDMDGEPQEADELEDLKEEAESLDIEGDYFAEEDEDYAQEDFIE).

It is found in the host membrane. The protein localises to the virion. This is an uncharacterized protein from Acanthamoeba polyphaga (Amoeba).